A 179-amino-acid polypeptide reads, in one-letter code: Large ribosomal subunit protein uL5 (179 aa).

It belongs to the universal ribosomal protein uL5 family. Part of the 50S ribosomal subunit; part of the 5S rRNA/L5/L18/L25 subcomplex. Contacts the 5S rRNA and the P site tRNA. Forms a bridge to the 30S subunit in the 70S ribosome.

Functionally, this is one of the proteins that bind and probably mediate the attachment of the 5S RNA into the large ribosomal subunit, where it forms part of the central protuberance. In the 70S ribosome it contacts protein S13 of the 30S subunit (bridge B1b), connecting the 2 subunits; this bridge is implicated in subunit movement. Contacts the P site tRNA; the 5S rRNA and some of its associated proteins might help stabilize positioning of ribosome-bound tRNAs. The sequence is that of Large ribosomal subunit protein uL5 from Pseudomonas putida (strain ATCC 700007 / DSM 6899 / JCM 31910 / BCRC 17059 / LMG 24140 / F1).